The primary structure comprises 341 residues: Tetraacyldisaccharide 4'-kinase (341 aa).

Position 54–61 (54–61 (TVGGTGKT)) interacts with ATP.

It belongs to the LpxK family.

The catalysed reaction is a lipid A disaccharide + ATP = a lipid IVA + ADP + H(+). The protein operates within glycolipid biosynthesis; lipid IV(A) biosynthesis; lipid IV(A) from (3R)-3-hydroxytetradecanoyl-[acyl-carrier-protein] and UDP-N-acetyl-alpha-D-glucosamine: step 6/6. Transfers the gamma-phosphate of ATP to the 4'-position of a tetraacyldisaccharide 1-phosphate intermediate (termed DS-1-P) to form tetraacyldisaccharide 1,4'-bis-phosphate (lipid IVA). This is Tetraacyldisaccharide 4'-kinase from Mesorhizobium japonicum (strain LMG 29417 / CECT 9101 / MAFF 303099) (Mesorhizobium loti (strain MAFF 303099)).